Consider the following 399-residue polypeptide: Dual-specificity RNA methyltransferase RlmN (399 aa).

Glutamate 116 serves as the catalytic Proton acceptor. The region spanning 122 to 352 (SEDRLTLCIS…VLLRRSMGRD (231 aa)) is the Radical SAM core domain. Cysteine 129 and cysteine 357 are joined by a disulfide. Positions 136, 140, and 143 each coordinate [4Fe-4S] cluster. Residues 185 to 186 (GE), serine 217, 238 to 240 (SLN), and asparagine 314 contribute to the S-adenosyl-L-methionine site. Residue cysteine 357 is the S-methylcysteine intermediate of the active site.

This sequence belongs to the radical SAM superfamily. RlmN family. Requires [4Fe-4S] cluster as cofactor.

Its subcellular location is the cytoplasm. The enzyme catalyses adenosine(2503) in 23S rRNA + 2 reduced [2Fe-2S]-[ferredoxin] + 2 S-adenosyl-L-methionine = 2-methyladenosine(2503) in 23S rRNA + 5'-deoxyadenosine + L-methionine + 2 oxidized [2Fe-2S]-[ferredoxin] + S-adenosyl-L-homocysteine. The catalysed reaction is adenosine(37) in tRNA + 2 reduced [2Fe-2S]-[ferredoxin] + 2 S-adenosyl-L-methionine = 2-methyladenosine(37) in tRNA + 5'-deoxyadenosine + L-methionine + 2 oxidized [2Fe-2S]-[ferredoxin] + S-adenosyl-L-homocysteine. Specifically methylates position 2 of adenine 2503 in 23S rRNA and position 2 of adenine 37 in tRNAs. m2A2503 modification seems to play a crucial role in the proofreading step occurring at the peptidyl transferase center and thus would serve to optimize ribosomal fidelity. This is Dual-specificity RNA methyltransferase RlmN from Bdellovibrio bacteriovorus (strain ATCC 15356 / DSM 50701 / NCIMB 9529 / HD100).